Consider the following 571-residue polypeptide: Kinesin light chain (571 aa).

The stretch at Leu54–Met160 forms a coiled coil. A compositionally biased stretch (basic and acidic residues) spans Glu167–Glu177. Positions Glu167–Ala210 are disordered. TPR repeat units lie at residues Leu220–Thr253, Ala262–Thr295, Ala304–Val337, Ala346–Glu379, Ala388–Lys421, and Thr471–Ala504. The tract at residues Gly518–Gln571 is disordered. Composition is skewed to basic and acidic residues over residues Ser526–Met544 and Lys551–Lys562.

This sequence belongs to the kinesin light chain family. As to quaternary structure, oligomeric complex composed of two heavy chains and two light chains.

The protein localises to the cytoplasm. It localises to the cytoskeleton. Its function is as follows. Kinesin is a microtubule-associated force-producing protein that may play a role in organelle transport. The light chain may function in coupling of cargo to the heavy chain or in the modulation of its ATPase activity. The chain is Kinesin light chain from Doryteuthis pealeii (Longfin inshore squid).